The sequence spans 139 residues: MRLTQGCFSFLPDLTDQQIEKQIAYCIDKGWAMNVEWTDDPHPRNSYWELWGLPLFDIKDIASVMFELSEARKSCANGYIRMNAFDASYGTESCVMSFIVSRPSNEPGFYLERTEGAGRFITYTIKRYSVQANAEGSRY.

The protein belongs to the RuBisCO small chain family. In terms of assembly, heterohexadecamer of 8 large and 8 small subunits.

The protein localises to the plastid. It is found in the chloroplast. In terms of biological role, ruBisCO catalyzes two reactions: the carboxylation of D-ribulose 1,5-bisphosphate, the primary event in carbon dioxide fixation, as well as the oxidative fragmentation of the pentose substrate in the photorespiration process. Both reactions occur simultaneously and in competition at the same active site. Although the small subunit is not catalytic it is essential for maximal activity. The chain is Ribulose bisphosphate carboxylase small subunit from Trieres chinensis (Marine centric diatom).